Here is a 367-residue protein sequence, read N- to C-terminus: Endophilin-A2 (367 aa).

The segment at 1-21 is membrane-binding amphipathic helix; it reads MSVAGLKKQFYKASQLVSEKV. The 232-residue stretch at 18–249 folds into the BAR domain; the sequence is SEKVGGAEGT…LKRRMREASS (232 aa). The segment at 60–87 is required for dimerization upon membrane association; sequence PNPASRAKLTMLNTMSKIRGQVKNPGYP. Positions 181 to 250 form a coiled coil; that stretch reads EELRQAMEKF…KRRMREASSR (70 aa). The interaction with ARC stretch occupies residues 218 to 254; sequence LVDAQLDYHRQAVQILDELAEKLKRRMREASSRPRRE. Positions 243–293 are disordered; sequence RMREASSRPRREYKPKPRETYDFGESDQSNGGFSCTPTPKVSASSSFRSDK. Over residues 245-263 the composition is skewed to basic and acidic residues; that stretch reads REASSRPRREYKPKPRETY. Positions 268–289 are enriched in polar residues; that stretch reads SDQSNGGFSCTPTPKVSASSSF. One can recognise an SH3 domain in the interval 305 to 364; it reads LDQPCCKALYDFEPENDGELGFKEGDIITLTNQIDENWYEGMINGQSGFFPLNYVEVLVP.

It belongs to the endophilin family. In terms of assembly, interacts with ARC. Interacts with SYNJ1 and DNM1. Highest level in central region of the theca of developing follicles (at protein level). Expressed at highest level in brain and testis, at high level in kidney, lung and stroma, low level in spleen and adrenal gland (at protein level). Expressed in most tissue with highest levels in small ovarian follicles, brain and testis.

Its subcellular location is the cytoplasm. The protein localises to the early endosome membrane. The protein resides in the cell projection. It is found in the podosome. Implicated in endocytosis. May recruit other proteins to membranes with high curvature. The protein is Endophilin-A2 of Gallus gallus (Chicken).